The following is a 495-amino-acid chain: Acetyl-coenzyme A carboxylase carboxyl transferase subunit beta, chloroplastic (495 aa).

The interval 188-208 (SRNSSENEGSSRRTRTKGSDL) is disordered. The CoA carboxyltransferase N-terminal domain maps to 226–495 (LWVQCENCYG…PLNQKSSKIK (270 aa)). Zn(2+) is bound by residues C230, C233, C249, and C252. A C4-type zinc finger spans residues 230 to 252 (CENCYGLNYKKFFKSKMNICEQC).

It belongs to the AccD/PCCB family. Acetyl-CoA carboxylase is a heterohexamer composed of biotin carboxyl carrier protein, biotin carboxylase and 2 subunits each of ACCase subunit alpha and ACCase plastid-coded subunit beta (accD). Zn(2+) serves as cofactor.

The protein localises to the plastid. Its subcellular location is the chloroplast stroma. The enzyme catalyses N(6)-carboxybiotinyl-L-lysyl-[protein] + acetyl-CoA = N(6)-biotinyl-L-lysyl-[protein] + malonyl-CoA. It participates in lipid metabolism; malonyl-CoA biosynthesis; malonyl-CoA from acetyl-CoA: step 1/1. Component of the acetyl coenzyme A carboxylase (ACC) complex. Biotin carboxylase (BC) catalyzes the carboxylation of biotin on its carrier protein (BCCP) and then the CO(2) group is transferred by the transcarboxylase to acetyl-CoA to form malonyl-CoA. In Nicotiana tomentosiformis (Tobacco), this protein is Acetyl-coenzyme A carboxylase carboxyl transferase subunit beta, chloroplastic.